We begin with the raw amino-acid sequence, 474 residues long: ATP synthase subunit beta (474 aa).

151–158 (GGAGVGKT) lines the ATP pocket.

It belongs to the ATPase alpha/beta chains family. F-type ATPases have 2 components, CF(1) - the catalytic core - and CF(0) - the membrane proton channel. CF(1) has five subunits: alpha(3), beta(3), gamma(1), delta(1), epsilon(1). CF(0) has three main subunits: a(1), b(2) and c(9-12). The alpha and beta chains form an alternating ring which encloses part of the gamma chain. CF(1) is attached to CF(0) by a central stalk formed by the gamma and epsilon chains, while a peripheral stalk is formed by the delta and b chains.

The protein localises to the cell inner membrane. It catalyses the reaction ATP + H2O + 4 H(+)(in) = ADP + phosphate + 5 H(+)(out). Its function is as follows. Produces ATP from ADP in the presence of a proton gradient across the membrane. The catalytic sites are hosted primarily by the beta subunits. This chain is ATP synthase subunit beta, found in Ruegeria sp. (strain TM1040) (Silicibacter sp.).